Consider the following 42-residue polypeptide: Photosystem I reaction center subunit IX (42 aa).

Residues 7–27 form a helical membrane-spanning segment; it reads FLSTAPVLIMALLTVTAGILI.

Belongs to the PsaJ family.

It localises to the cellular thylakoid membrane. Functionally, may help in the organization of the PsaE and PsaF subunits. This Crocosphaera subtropica (strain ATCC 51142 / BH68) (Cyanothece sp. (strain ATCC 51142)) protein is Photosystem I reaction center subunit IX.